The primary structure comprises 447 residues: Probable glycine dehydrogenase (decarboxylating) subunit 1 (447 aa).

Belongs to the GcvP family. N-terminal subunit subfamily. The glycine cleavage system is composed of four proteins: P, T, L and H. In this organism, the P 'protein' is a heterodimer of two subunits.

The enzyme catalyses N(6)-[(R)-lipoyl]-L-lysyl-[glycine-cleavage complex H protein] + glycine + H(+) = N(6)-[(R)-S(8)-aminomethyldihydrolipoyl]-L-lysyl-[glycine-cleavage complex H protein] + CO2. Functionally, the glycine cleavage system catalyzes the degradation of glycine. The P protein binds the alpha-amino group of glycine through its pyridoxal phosphate cofactor; CO(2) is released and the remaining methylamine moiety is then transferred to the lipoamide cofactor of the H protein. In Bacillus mycoides (strain KBAB4) (Bacillus weihenstephanensis), this protein is Probable glycine dehydrogenase (decarboxylating) subunit 1.